Reading from the N-terminus, the 611-residue chain is ANK repeat-containing protein nipk-1 (611 aa).

Residues 91 to 149 adopt a coiled-coil conformation; that stretch reads NSKSKKKTENQETKEKDEEAEEKKDGPPKDDKELKMKKEKEQEDENAELDEQKKDGDLL. Disordered stretches follow at residues 92–167, 212–255, and 280–333; these read SKSK…SHPY, ISAS…DTSR, and TKEE…LSPR. The segment covering 97–131 has biased composition (basic and acidic residues); that stretch reads KTENQETKEKDEEAEEKKDGPPKDDKELKMKKEKE. Composition is skewed to polar residues over residues 212-223, 239-255, and 315-333; these read ISASTTPDTVLS, ESLQ…DTSR, and GTCS…LSPR. ANK repeat units follow at residues 375-405, 417-446, 452-482, 486-527, and 532-561; these read DGDT…TMNE, FGET…SPNS, VGDS…RVNE, DGQT…DPTI, and TGKT…EDTF.

Belongs to the iASPP family. In terms of tissue distribution, expressed in the nervous system.

Its function is as follows. Acts downstream of the receptor complex composed of ilcr-1 and ilcr-2, which is a signaling complex that modulates neuronal activity and animal behavior in response to sensory neuron input. Mediates signaling of the complex. The polypeptide is ANK repeat-containing protein nipk-1 (Caenorhabditis elegans).